Here is a 238-residue protein sequence, read N- to C-terminus: Neuromodulin (238 aa).

The tract at residues 1-238 is disordered; sequence MLCCMRRTKQ…EEPEADQEHA (238 aa). S-palmitoyl cysteine attachment occurs at residues cysteine 3 and cysteine 4. Positions 9–32 are enriched in basic and acidic residues; that stretch reads KQVEKNDEDQKIEQDGIKPEDKAH. The IQ domain maps to 31-60; it reads AHKAATKIQASFRGHITRKKLKGEKKDDAQ. The residue at position 41 (serine 41) is a Phosphoserine; by PHK and PKC. The segment covering 54 to 83 has biased composition (basic and acidic residues); sequence EKKDDAQAAEAEANKKDEAPVADGVEKKGE. Positions 84-95 are enriched in low complexity; sequence GTTATEAAPATG. Over residues 97–116 the composition is skewed to basic and acidic residues; sequence KPDEPGKAGETPSEEKKGEG. Residues 119–130 are compositionally biased toward low complexity; it reads ATEQAAPQAPAS. The span at 139–154 shows a compositional bias: polar residues; the sequence is ETESATKASTDNSPSS. 3 positions are modified to phosphoserine: serine 151, serine 153, and serine 154. Residues 155 to 167 are compositionally biased toward basic and acidic residues; the sequence is KAEDAPAKEEPKQ. Low complexity predominate over residues 168–199; it reads ADVPAAVTAAAATTPAAEDAAAKATAQPPTET. Residue threonine 181 is modified to Phosphothreonine. Phosphoserine; by CK2 occurs at positions 202 and 203. Positions 213–225 are enriched in basic and acidic residues; sequence DETKPKESARQDE. Residues 226–238 are compositionally biased toward acidic residues; the sequence is GKEEEPEADQEHA.

This sequence belongs to the neuromodulin family. Identified in a complex containing FGFR4, NCAM1, CDH2, PLCG1, FRS2, SRC, SHC1, GAP43 and CTTN. Interacts (via IQ domain) with calmodulin. Binds calmodulin with a greater affinity in the absence of Ca(2+) than in its presence. Post-translationally, phosphorylated. Phosphorylation of this protein by a protein kinase C is specifically correlated with certain forms of synaptic plasticity. In terms of processing, palmitoylated by ZDHHC3. Palmitoylation is regulated by ARF6 and is essential for plasma membrane association and axonal and dendritic filopodia induction. Deacylated by LYPLA2.

Its subcellular location is the cell membrane. The protein localises to the cell projection. It is found in the growth cone membrane. The protein resides in the synapse. It localises to the filopodium membrane. Its subcellular location is the perikaryon. The protein localises to the dendrite. It is found in the axon. The protein resides in the cytoplasm. Functionally, this protein is associated with nerve growth. It is a major component of the motile 'growth cones' that form the tips of elongating axons. Plays a role in axonal and dendritic filopodia induction. The polypeptide is Neuromodulin (GAP43) (Macaca fascicularis (Crab-eating macaque)).